Consider the following 81-residue polypeptide: Dermaseptin-B7 (81 aa).

Positions methionine 1–cysteine 22 are cleaved as a signal peptide. The propeptide occupies glutamate 23–lysine 44. The interval glutamate 24–tryptophan 48 is disordered. Residues glutamate 30 to glutamine 40 are compositionally biased toward acidic residues. Valine amide is present on valine 78. A propeptide spanning residues glutamate 80–glutamine 81 is cleaved from the precursor.

The protein belongs to the frog skin active peptide (FSAP) family. Dermaseptin subfamily. In terms of tissue distribution, expressed by the skin glands.

Its subcellular location is the secreted. In terms of biological role, has antimicrobial activity. The chain is Dermaseptin-B7 (DRG1) from Phyllomedusa bicolor (Two-colored leaf frog).